We begin with the raw amino-acid sequence, 183 residues long: Troponin I, fast skeletal muscle (183 aa).

The residue at position 2 (serine 2) is an N-acetylserine. The segment at 2–48 (SDEEKKRRAATARRQHLKSAMLQLAVTEIEKEAAAKEVEKQNYLAEH) is involved in binding TNC. The involved in binding TNC and actin stretch occupies residues 97–117 (SQKLFDLRGKFKRPPLRRVRM).

Belongs to the troponin I family. Binds to actin and tropomyosin. In terms of processing, the N-terminus is blocked.

Functionally, troponin I is the inhibitory subunit of troponin, the thin filament regulatory complex which confers calcium-sensitivity to striated muscle actomyosin ATPase activity. This is Troponin I, fast skeletal muscle (TNNI2) from Gallus gallus (Chicken).